We begin with the raw amino-acid sequence, 345 residues long: uncharacterized protein (345 aa).

The protein localises to the cell membrane. Functionally, involved in potassium and divalent cation transport. Enhances the transport activity of the cation/potassium transporter CzcD. This is an uncharacterized protein from Bacillus subtilis (strain 168).